The primary structure comprises 116 residues: Guanylin (116 aa).

A signal peptide spans Met1 to Thr23. The propeptide occupies Val24 to Asp101. Intrachain disulfides connect Cys69–Cys83, Cys105–Cys113, and Cys108–Cys116.

It belongs to the guanylin family. Localized in both crypts and villi in the small intestine and to superficial epithelial cells in the colon.

Its subcellular location is the secreted. Its function is as follows. Endogenous activator of intestinal guanylate cyclase. It stimulates this enzyme through the same receptor binding region as the heat-stable enterotoxins. This Mus musculus (Mouse) protein is Guanylin (Guca2a).